A 171-amino-acid chain; its full sequence is Secretion monitor (171 aa).

Positions 1-36 are cleaved as a signal peptide; it reads MIGILNRWRQFGRRYFWPHLLLGMVAASLGLPTSLN.

This sequence belongs to the SecM family.

Its subcellular location is the cytoplasm. It is found in the cytosol. It localises to the periplasm. Its function is as follows. Regulates secA expression by translational coupling of the secM secA operon. Translational pausing at a specific Pro residue 5 residues before the end of the protein may allow disruption of a mRNA repressor helix that normally suppresses secA translation initiation. This Pectobacterium carotovorum subsp. carotovorum (strain PC1) protein is Secretion monitor.